Here is a 224-residue protein sequence, read N- to C-terminus: GrpE protein homolog 2, mitochondrial (224 aa).

Residues 1-31 constitute a mitochondrion transit peptide; sequence MAARSLWAVQRLQRLLASGAMSESRGWLHPF. At Lys-141 the chain carries N6-acetyllysine.

Belongs to the GrpE family. In terms of assembly, probable component of the PAM complex at least composed of a mitochondrial HSP70 protein, GRPEL1 or GRPEL2, TIMM44, TIMM16/PAM16 and TIMM14/DNAJC19. In terms of tissue distribution, ubiquitous.

Its subcellular location is the mitochondrion matrix. Essential component of the PAM complex, a complex required for the translocation of transit peptide-containing proteins from the inner membrane into the mitochondrial matrix in an ATP-dependent manner. Seems to control the nucleotide-dependent binding of mitochondrial HSP70 to substrate proteins. Stimulates ATPase activity of mt-HSP70. May also serve to modulate the interconversion of oligomeric (inactive) and monomeric (active) forms of mt-HSP70. The polypeptide is GrpE protein homolog 2, mitochondrial (Grpel2) (Mus musculus (Mouse)).